Here is a 396-residue protein sequence, read N- to C-terminus: Aspartic protease 1 (396 aa).

The N-terminal stretch at 1–15 is a signal peptide; sequence MQTFVLLALVAACSA. Residues 68–389 form the Peptidase A1 domain; sequence YLGNITLGTP…DIGNGQIGFA (322 aa). The N-linked (GlcNAc...) asparagine glycan is linked to Asn71. Residue Asp86 is part of the active site. The cysteines at positions 99 and 104 are disulfide-linked. Asp278 is a catalytic residue. The cysteines at positions 313 and 349 are disulfide-linked.

This sequence belongs to the peptidase A1 family. In terms of assembly, interacts with B.thuringiensis endotoxin Cry6Aa; the interaction prevents Cry6Aa proteolysis by host gut proteases.

Its subcellular location is the cytoplasm. The protein localises to the lysosome. It is found in the secreted. In terms of biological role, aspartic protease, which is part of the necrosis cell death pathway. Promotes B.thuringiensis Cry6Aa stability by preventing its proteolysis by host gut proteases. Required for Cry6Aa-induced necrotic death of intestinal cells. Cry6Aa uptake into the host intestinal cells triggers an increase in intracellular Ca(2+) levels leading to lysosome rupture and to the subsequent release of asp-1 which leads to necrosis. The chain is Aspartic protease 1 from Caenorhabditis elegans.